Consider the following 349-residue polypeptide: MTDAPLVTAELPGSGGSLRRSPEDFRVDEVPAYLPSGAGPHLYLRVEKRGRTTRDALRTLARALGVPERDAGYAGLKDKDAVTTQWLSFPAARDPEPQALASEGLRVLEVSRHANKLRPGHVRANRFQLAVRGGDLARAQAAAAALAERGLPNLFGPQRFGTEGRNAEVGRALLLGDPSPEARRAARDRFLRRLSISAYQALLFNRWLAERMADGLFATAVAGDVLKKLDTGGLFTCADPAVDGPRVQRFEVSPAGPMFGHKLRAAEGEALAREERLLAAEGIQLSDFARGGGEAEGTRRAARLRVEVALAPLEDGYLATFELPKGSYATVVMRELMKAGAELPEADED.

The disordered stretch occupies residues 1 to 22; sequence MTDAPLVTAELPGSGGSLRRSP. Residue Asp-78 is the Nucleophile of the active site. The TRUD domain occupies 150 to 304; the sequence is GLPNLFGPQR…AEGTRRAARL (155 aa).

The protein belongs to the pseudouridine synthase TruD family.

The catalysed reaction is uridine(13) in tRNA = pseudouridine(13) in tRNA. Functionally, responsible for synthesis of pseudouridine from uracil-13 in transfer RNAs. The chain is tRNA pseudouridine synthase D from Anaeromyxobacter sp. (strain Fw109-5).